A 127-amino-acid chain; its full sequence is uncharacterized protein (127 aa).

2 consecutive transmembrane segments (helical) span residues 42–62 and 78–98; these read LLISNFAGLGIAFIYCLIAFI and GLPIILCSTLMLVGNILYYFL.

It is found in the membrane. This is an uncharacterized protein from Schizosaccharomyces pombe (strain 972 / ATCC 24843) (Fission yeast).